The sequence spans 412 residues: Serine hydroxymethyltransferase (412 aa).

Residues Leu117 and 121–123 each bind (6S)-5,6,7,8-tetrahydrofolate; that span reads GHL. Lys226 is subject to N6-(pyridoxal phosphate)lysine.

This sequence belongs to the SHMT family. Homodimer. It depends on pyridoxal 5'-phosphate as a cofactor.

It localises to the cytoplasm. It carries out the reaction (6R)-5,10-methylene-5,6,7,8-tetrahydrofolate + glycine + H2O = (6S)-5,6,7,8-tetrahydrofolate + L-serine. Its pathway is one-carbon metabolism; tetrahydrofolate interconversion. It functions in the pathway amino-acid biosynthesis; glycine biosynthesis; glycine from L-serine: step 1/1. Functionally, catalyzes the reversible interconversion of serine and glycine with tetrahydrofolate (THF) serving as the one-carbon carrier. This reaction serves as the major source of one-carbon groups required for the biosynthesis of purines, thymidylate, methionine, and other important biomolecules. Also exhibits THF-independent aldolase activity toward beta-hydroxyamino acids, producing glycine and aldehydes, via a retro-aldol mechanism. In Staphylococcus aureus (strain USA300), this protein is Serine hydroxymethyltransferase.